We begin with the raw amino-acid sequence, 551 residues long: Trehalose-6-phosphate hydrolase (551 aa).

Aspartate 200 serves as the catalytic Nucleophile. Glutamate 251 serves as the catalytic Proton donor.

Belongs to the glycosyl hydrolase 13 family.

It is found in the cytoplasm. It catalyses the reaction alpha,alpha-trehalose 6-phosphate + H2O = D-glucose 6-phosphate + D-glucose. Its function is as follows. Hydrolyzes trehalose-6-phosphate to glucose and glucose 6-phosphate. Can also very effectively hydrolyze p-nitrophenyl-alpha-D-glucopyranoside, but it does not recognize trehalose, sucrose, maltose, isomaltose, or maltodextrins. The chain is Trehalose-6-phosphate hydrolase (treC) from Escherichia coli (strain K12).